The following is a 211-amino-acid chain: Arginine exporter protein ArgO (211 aa).

Topologically, residues 1–38 (MFSYYFQGLALGAAMILPLGPQNAFVMNQGIRRQYHIM) are cytoplasmic. The helical transmembrane segment at 39–58 (IALLCAISDLVLICAGIFGG) threads the bilayer. The Periplasmic segment spans residues 59–63 (SALLM). A helical membrane pass occupies residues 64–91 (QSPWLLALVTWGGVAFLLWYGFGAFKTA). Residues 92 to 102 (MSSNIELASAE) are Cytoplasmic-facing. Residues 103–130 (VMKQGRWKIIATMLAVTWLNPHVYLDTF) traverse the membrane as a helical segment. Over 131–140 (VVLGSLGGQL) the chain is Periplasmic. Residues 141 to 170 (DVEPKRWFALGTISASFLWFFGLALLAAWL) form a helical membrane-spanning segment. Over 171–173 (APR) the chain is Cytoplasmic. The helical transmembrane segment at 174 to 200 (LRTAKAQRIINLVVGCVMWFIALQLAR) threads the bilayer. Residues 201–211 (DGIAHAQALFS) are Periplasmic-facing.

This sequence belongs to the LysE/ArgO transporter (TC 2.A.75) family. As to quaternary structure, monomer.

The protein localises to the cell inner membrane. The enzyme catalyses L-arginine(in) = L-arginine(out). Involved in the export of arginine. Important to control the intracellular level of arginine and the correct balance between arginine and lysine. May also be involved in the export of canavanine (a plant-derived antimetabolite). The chain is Arginine exporter protein ArgO from Escherichia coli (strain K12).